Here is a 128-residue protein sequence, read N- to C-terminus: MSSEKEAALRRLDDSPTIFDKIIKKEIPSTVVYEDEKVLAFRDINPQAPTHILIIPKVKDGLTGLAKAEERHIEILGYLLYVAKVVAKQEGLEDGYRVVINDGPSGCQSVYHIHVHLLGGRQMNWPPG.

An HIT domain is found at 18-128; that stretch reads IFDKIIKKEI…GGRQMNWPPG (111 aa). The Histidine triad motif signature appears at 112–116; sequence HIHVH.

In terms of assembly, homodimer.

In Zea mays (Maize), this protein is 14 kDa zinc-binding protein (ZBP14).